A 165-amino-acid polypeptide reads, in one-letter code: MNKRNKVKHLNRNKGHRDALINNMITSLFKYERIESTQAKLKVIRSHAEKLITRAKKNLVADLKPEVQLHNKREVMKRIKDREVVVKLFEDIAKRFESKNGGYTRVLKLVNRASDNSEVGILELTSRKERAILLKERQEKREAQEKAREEKRTARKSDSVPARKK.

The segment covering 138–158 has biased composition (basic and acidic residues); sequence QEKREAQEKAREEKRTARKSD. The segment at 138–165 is disordered; sequence QEKREAQEKAREEKRTARKSDSVPARKK.

It belongs to the bacterial ribosomal protein bL17 family. Part of the 50S ribosomal subunit. Contacts protein L32.

This is Large ribosomal subunit protein bL17 from Leptospira borgpetersenii serovar Hardjo-bovis (strain JB197).